We begin with the raw amino-acid sequence, 379 residues long: Cobalt-precorrin-5B C(1)-methyltransferase (379 aa).

The protein belongs to the CbiD family.

It carries out the reaction Co-precorrin-5B + S-adenosyl-L-methionine = Co-precorrin-6A + S-adenosyl-L-homocysteine. Its pathway is cofactor biosynthesis; adenosylcobalamin biosynthesis; cob(II)yrinate a,c-diamide from sirohydrochlorin (anaerobic route): step 6/10. Its function is as follows. Catalyzes the methylation of C-1 in cobalt-precorrin-5B to form cobalt-precorrin-6A. The polypeptide is Cobalt-precorrin-5B C(1)-methyltransferase (Salmonella paratyphi A (strain ATCC 9150 / SARB42)).